Consider the following 70-residue polypeptide: ATP synthase subunit c (70 aa).

2 consecutive transmembrane segments (helical) span residues 4 to 24 (IAAG…DGIV) and 47 to 67 (FIGV…SLLV).

The protein belongs to the ATPase C chain family. F-type ATPases have 2 components, F(1) - the catalytic core - and F(0) - the membrane proton channel. F(1) has five subunits: alpha(3), beta(3), gamma(1), delta(1), epsilon(1). F(0) has three main subunits: a(1), b(2) and c(10-14). The alpha and beta chains form an alternating ring which encloses part of the gamma chain. F(1) is attached to F(0) by a central stalk formed by the gamma and epsilon chains, while a peripheral stalk is formed by the delta and b chains.

Its subcellular location is the cell membrane. In terms of biological role, f(1)F(0) ATP synthase produces ATP from ADP in the presence of a proton or sodium gradient. F-type ATPases consist of two structural domains, F(1) containing the extramembraneous catalytic core and F(0) containing the membrane proton channel, linked together by a central stalk and a peripheral stalk. During catalysis, ATP synthesis in the catalytic domain of F(1) is coupled via a rotary mechanism of the central stalk subunits to proton translocation. Its function is as follows. Key component of the F(0) channel; it plays a direct role in translocation across the membrane. A homomeric c-ring of between 10-14 subunits forms the central stalk rotor element with the F(1) delta and epsilon subunits. The protein is ATP synthase subunit c of Pediococcus pentosaceus (strain ATCC 25745 / CCUG 21536 / LMG 10740 / 183-1w).